Here is a 151-residue protein sequence, read N- to C-terminus: UPF0561 protein C2orf68 homolog (151 aa).

The segment at 1-89 is disordered; the sequence is MEEEGEAQGR…TLKDEPNDNG (89 aa). Composition is skewed to basic and acidic residues over residues 32 to 46 and 70 to 85; these read LARDDYDREVKQAKE and RQREKAHTTETLKDEP.

It belongs to the UPF0561 family.

The sequence is that of UPF0561 protein C2orf68 homolog from Xenopus laevis (African clawed frog).